Reading from the N-terminus, the 227-residue chain is Urease accessory protein UreF (227 aa).

It belongs to the UreF family. As to quaternary structure, ureD, UreF and UreG form a complex that acts as a GTP-hydrolysis-dependent molecular chaperone, activating the urease apoprotein by helping to assemble the nickel containing metallocenter of UreC. The UreE protein probably delivers the nickel.

The protein localises to the cytoplasm. In terms of biological role, required for maturation of urease via the functional incorporation of the urease nickel metallocenter. This is Urease accessory protein UreF from Actinobacillus pleuropneumoniae serotype 5b (strain L20).